Reading from the N-terminus, the 168-residue chain is Gremlin-2 (168 aa).

The N-terminal stretch at 1-21 is a signal peptide; sequence MFWKLSLTLLLVAVLVKVAET. A glycan (N-linked (GlcNAc...) asparagine) is linked at asparagine 40. Disulfide bonds link cysteine 73-cysteine 123, cysteine 87-cysteine 137, cysteine 97-cysteine 155, and cysteine 101-cysteine 157. Residues 73–163 form the CTCK domain; it reads CKTQPLRQTV…HCRCMSVNLS (91 aa). An N-linked (GlcNAc...) asparagine glycan is attached at asparagine 161.

This sequence belongs to the DAN family. Homodimer. Interacts with BMP2, BMP4 and BMP7, but has lower affinity for BMP7 than for BMP2 and BMP4. Binds heparin; this impairs the interaction with BMP2. N-glycosylated. Highly expressed in the ovary, followed by brain, spleen, colon, kidney and uterus. In ovary expressed in granulosa cells of selective early antral follicles.

The protein resides in the secreted. In terms of biological role, cytokine that inhibits the activity of BMP2 and BMP4 in a dose-dependent manner, and thereby modulates signaling by BMP family members. Contributes to the regulation of embryonic morphogenesis via BMP family members. Antagonizes BMP4-induced suppression of progesterone production in granulosa cells. This Mus musculus (Mouse) protein is Gremlin-2 (Grem2).